Reading from the N-terminus, the 764-residue chain is 5-methyltetrahydropteroyltriglutamate--homocysteine methyltransferase (764 aa).

5-methyltetrahydropteroyltri-L-glutamate-binding positions include 16 to 19 (RELK) and Lys115. Residues 435-437 (IGS) and Glu488 each bind L-homocysteine. Residues 435-437 (IGS) and Glu488 contribute to the L-methionine site. 5-methyltetrahydropteroyltri-L-glutamate contacts are provided by residues 519–520 (RC) and Trp565. Residue Asp603 participates in L-homocysteine binding. Asp603 provides a ligand contact to L-methionine. 5-methyltetrahydropteroyltri-L-glutamate is bound at residue Glu609. The Zn(2+) site is built by His645, Cys647, and Glu669. The Proton donor role is filled by His698. Cys730 contributes to the Zn(2+) binding site.

Belongs to the vitamin-B12 independent methionine synthase family. It depends on Zn(2+) as a cofactor.

It catalyses the reaction 5-methyltetrahydropteroyltri-L-glutamate + L-homocysteine = tetrahydropteroyltri-L-glutamate + L-methionine. The protein operates within amino-acid biosynthesis; L-methionine biosynthesis via de novo pathway; L-methionine from L-homocysteine (MetE route): step 1/1. Functionally, catalyzes the transfer of a methyl group from 5-methyltetrahydrofolate to homocysteine resulting in methionine formation. The polypeptide is 5-methyltetrahydropteroyltriglutamate--homocysteine methyltransferase (Burkholderia pseudomallei (strain 668)).